The sequence spans 693 residues: MSTPFGLDLGNNNSVLAVARNRGIDVVVNEVSNRSTPSLVGFGPRNRYLGESGKTKQTSNVKNTVENLKRIIGLKFKDPEFDIENKFFTSKLVQLKNGKVGVEVEFGGKTHVFSATQLTAMFIDKVKHTVQEETKSSITDVCLAVPVWYSEEQRYNIADAARIAGLNPVRIVNDVTAAAVSYGVFKNDLPGPEEKPRIIGLVDIGHSTYTCSIMAFRKGEMKVLGTAYDKHFGGRDFDRAITEHFADQFKDKYKIDIRKNPKAYNRILIAAEKLKKVLSANTTAPFSVESVMDDIDVSSQLSREELEELVEPLLKRVTYPITNALAQAKLTVNDIDFVEIIGGTTRIPVLKKSISDVFGKPLSSTLNQDEAVAKGAAFICAIHSPTLRVRPFKFEDIDPYSVSYTWDKQVDDEDRLEVFPANSSYPSTKLITLHRTGDFSMKAVYTHPSKLPKGTSTTIAKWSFTGVKVPKDQDFIPVKVKLRCDPSGLHIIENAYTTEDITVQEPVPLPEDAPEDAEPQFKEVTKTIKKDVLGMTAKTFALNPVELNDLIEKENELRNQDKLVAETEDRKNALEEYIYTLRAKLDDEYSDFASDAEKEKLKNMLATTENWLYGDGDDSTKAKYIAKYEELASLGNIIRGRYLAKEEEKRQALRANQETSKMNDIAEKLAEQRRARAASDDSDDNNDENMDLD.

The disordered stretch occupies residues 653–693; that stretch reads LRANQETSKMNDIAEKLAEQRRARAASDDSDDNNDENMDLD. Positions 664–679 are enriched in basic and acidic residues; sequence DIAEKLAEQRRARAAS. Residues 680–693 are compositionally biased toward acidic residues; it reads DDSDDNNDENMDLD.

This sequence belongs to the heat shock protein 70 family.

Has a calcium-dependent calmodulin-binding activity. This is Heat shock protein homolog SSE2 (SSE2) from Saccharomyces cerevisiae (strain ATCC 204508 / S288c) (Baker's yeast).